Reading from the N-terminus, the 440-residue chain is Transposon Ty1-GR2 Gag polyprotein (440 aa).

Low complexity predominate over residues 1–16 (MESQQLSQHSHISHGS). Disordered regions lie at residues 1–93 (MESQ…MMTQ), 126–173 (PQSQ…RPPP), and 352–440 (GSRN…PGTY). Polar residues-rich tracts occupy residues 48 to 60 (TKANSQQTTTPAS) and 127 to 152 (QSQFPQYPSSVGTPLSTPSPESGNTF). Over residues 153–165 (TDSSSADSDMTST) the composition is skewed to low complexity. Residues 299 to 401 (NNGIHINNKV…NSKSKTARAH (103 aa)) are RNA-binding. The span at 402–418 (NVSTSNNSPSTDNDSIS) shows a compositional bias: low complexity. Ser-416 is modified (phosphoserine). Polar residues predominate over residues 419–428 (KSTTEPIQLN). The span at 429 to 440 (NKHDLHLRPGTY) shows a compositional bias: basic and acidic residues.

In terms of assembly, homotrimer.

The protein resides in the cytoplasm. Capsid protein (CA) is the structural component of the virus-like particle (VLP), forming the shell that encapsulates the retrotransposons dimeric RNA genome. The particles are assembled from trimer-clustered units and there are holes in the capsid shells that allow for the diffusion of macromolecules. CA also has nucleocapsid-like chaperone activity, promoting primer tRNA(i)-Met annealing to the multipartite primer-binding site (PBS), dimerization of Ty1 RNA and initiation of reverse transcription. The chain is Transposon Ty1-GR2 Gag polyprotein (TY1A-GR2) from Saccharomyces cerevisiae (strain ATCC 204508 / S288c) (Baker's yeast).